We begin with the raw amino-acid sequence, 342 residues long: Selenide, water dikinase (342 aa).

Cys13 is an active-site residue. ATP contacts are provided by residues Lys16 and 44 to 46 (SCD). Asp47 serves as a coordination point for Mg(2+). ATP is bound by residues Asp64, Asp87, and 134 to 136 (GHS). Residue Asp87 coordinates Mg(2+). Asp222 provides a ligand contact to Mg(2+).

This sequence belongs to the selenophosphate synthase 1 family. Class I subfamily. In terms of assembly, homodimer. It depends on Mg(2+) as a cofactor.

It carries out the reaction hydrogenselenide + ATP + H2O = selenophosphate + AMP + phosphate + 2 H(+). Functionally, synthesizes selenophosphate from selenide and ATP. The chain is Selenide, water dikinase from Agathobacter rectalis (strain ATCC 33656 / DSM 3377 / JCM 17463 / KCTC 5835 / VPI 0990) (Eubacterium rectale).